A 30-amino-acid chain; its full sequence is Cyclotide hyen-G (30 aa).

A cross-link (cyclopeptide (Gly-Asp)) is located at residues 1-30; the sequence is GLPCGESCVYIPCISTVLGCSCSNKVCYRD. Cystine bridges form between Cys-4–Cys-20, Cys-8–Cys-22, and Cys-13–Cys-27.

In terms of processing, this is a cyclic peptide. As to expression, detected in stems (at protein level).

Its function is as follows. Probably participates in a plant defense mechanism. The polypeptide is Cyclotide hyen-G (Pigea enneasperma (Spade flower)).